We begin with the raw amino-acid sequence, 440 residues long: uncharacterized protein (440 aa).

12 helical membrane passes run 24–44, 47–67, 93–113, 117–137, 155–175, 183–203, 229–249, 276–296, 323–343, 346–366, 379–399, and 400–420; these read VVIG…APAA, AGSG…CNAI, FWGY…CAAM, VGFY…VVAL, IVAV…GSGA, IGVD…FFAF, LALG…IAVL, VVQI…ILGV, PFRA…TADI, AIGF…ASAL, IPLV…LSSV, and AAGA…RIIT.

It belongs to the amino acid-polyamine-organocation (APC) superfamily.

The protein localises to the cell membrane. Functionally, probable amino-acid or metabolite transport protein. This is an uncharacterized protein from Mycobacterium bovis (strain ATCC BAA-935 / AF2122/97).